A 138-amino-acid polypeptide reads, in one-letter code: Acidic phospholipase A2 Ts-A1 (138 aa).

The signal sequence occupies residues 1-16 (MRTLWIMAVLQVGVEG). 7 cysteine pairs are disulfide-bonded: Cys-42-Cys-131, Cys-44-Cys-60, Cys-59-Cys-111, Cys-65-Cys-138, Cys-66-Cys-104, Cys-73-Cys-97, and Cys-91-Cys-102. Positions 43, 45, and 47 each coordinate Ca(2+). His-63 is an active-site residue. A Ca(2+)-binding site is contributed by Asp-64. Asp-105 is an active-site residue.

It depends on Ca(2+) as a cofactor. Expressed by the venom gland.

The protein resides in the secreted. The catalysed reaction is a 1,2-diacyl-sn-glycero-3-phosphocholine + H2O = a 1-acyl-sn-glycero-3-phosphocholine + a fatty acid + H(+). In terms of biological role, snake venom phospholipase A2 (PLA2) that shows a moderate inhibition of ADP-induced human platelet aggregation when tested on platelet rich plasma. Exhibits high hydrolytic activities and prefers the anionic micelles (dPPC with deoxycholate) to the zwitterionic micelles (dPPC with Triton X-100). PLA2 catalyzes the calcium-dependent hydrolysis of the 2-acyl groups in 3-sn-phosphoglycerides. The chain is Acidic phospholipase A2 Ts-A1 from Trimeresurus stejnegeri (Chinese green tree viper).